We begin with the raw amino-acid sequence, 160 residues long: Cytochrome b6-f complex subunit 4 (160 aa).

Transmembrane regions (helical) follow at residues 36–56 (LLYI…GLSV), 95–115 (LLGV…PFIE), and 131–151 (TVFL…ALPI).

This sequence belongs to the cytochrome b family. PetD subfamily. In terms of assembly, the 4 large subunits of the cytochrome b6-f complex are cytochrome b6, subunit IV (17 kDa polypeptide, petD), cytochrome f and the Rieske protein, while the 4 small subunits are petG, petL, petM and petN. The complex functions as a dimer.

It is found in the plastid. It localises to the chloroplast thylakoid membrane. Functionally, component of the cytochrome b6-f complex, which mediates electron transfer between photosystem II (PSII) and photosystem I (PSI), cyclic electron flow around PSI, and state transitions. This chain is Cytochrome b6-f complex subunit 4, found in Chaetosphaeridium globosum (Charophycean green alga).